Here is a 153-residue protein sequence, read N- to C-terminus: Superoxide dismutase [Cu-Zn] (153 aa).

Cu cation-binding residues include His45, His47, and His62. Residues Cys56 and Cys145 are joined by a disulfide bond. The Zn(2+) site is built by His62, His70, His79, and Asp82. Residue His119 coordinates Cu cation.

This sequence belongs to the Cu-Zn superoxide dismutase family. Homodimer. The cofactor is Cu cation. Requires Zn(2+) as cofactor.

Its subcellular location is the cytoplasm. The enzyme catalyses 2 superoxide + 2 H(+) = H2O2 + O2. Destroys radicals which are normally produced within the cells and which are toxic to biological systems. The chain is Superoxide dismutase [Cu-Zn] from Drosophila virilis (Fruit fly).